The primary structure comprises 646 residues: Phosphomethylpyrimidine synthase (646 aa).

Residues M1–A13 are compositionally biased toward polar residues. Positions M1–D30 are disordered. Residues N221, M250, Y279, H315, S335–G337, D376–R379, and E415 contribute to the substrate site. Residue H419 coordinates Zn(2+). Y442 provides a ligand contact to substrate. A Zn(2+)-binding site is contributed by H483. Residues C563, C566, and C571 each coordinate [4Fe-4S] cluster.

This sequence belongs to the ThiC family. In terms of assembly, homodimer. Requires [4Fe-4S] cluster as cofactor.

It catalyses the reaction 5-amino-1-(5-phospho-beta-D-ribosyl)imidazole + S-adenosyl-L-methionine = 4-amino-2-methyl-5-(phosphooxymethyl)pyrimidine + CO + 5'-deoxyadenosine + formate + L-methionine + 3 H(+). It functions in the pathway cofactor biosynthesis; thiamine diphosphate biosynthesis. Its function is as follows. Catalyzes the synthesis of the hydroxymethylpyrimidine phosphate (HMP-P) moiety of thiamine from aminoimidazole ribotide (AIR) in a radical S-adenosyl-L-methionine (SAM)-dependent reaction. The protein is Phosphomethylpyrimidine synthase of Nitrobacter winogradskyi (strain ATCC 25391 / DSM 10237 / CIP 104748 / NCIMB 11846 / Nb-255).